The following is a 213-amino-acid chain: Orotate phosphoribosyltransferase (213 aa).

Residue Lys-26 participates in 5-phospho-alpha-D-ribose 1-diphosphate binding. Position 34–35 (34–35) interacts with orotate; sequence FF. 5-phospho-alpha-D-ribose 1-diphosphate is bound by residues 72-73, Arg-99, Lys-100, Lys-103, His-105, and 124-132; these read YK and DDVITAGTA. Residues Thr-128 and Arg-156 each contribute to the orotate site.

Belongs to the purine/pyrimidine phosphoribosyltransferase family. PyrE subfamily. As to quaternary structure, homodimer. The cofactor is Mg(2+).

It carries out the reaction orotidine 5'-phosphate + diphosphate = orotate + 5-phospho-alpha-D-ribose 1-diphosphate. It functions in the pathway pyrimidine metabolism; UMP biosynthesis via de novo pathway; UMP from orotate: step 1/2. Its function is as follows. Catalyzes the transfer of a ribosyl phosphate group from 5-phosphoribose 1-diphosphate to orotate, leading to the formation of orotidine monophosphate (OMP). The chain is Orotate phosphoribosyltransferase from Escherichia coli O157:H7.